Consider the following 641-residue polypeptide: MMSHSPSMPCSALFLLLLLLLPPTFKGGSLRYHGPGWKLFHRLSKGFRSSHQRQTQQMRQNVPQGQSGDDCQGIFDLYLVLDKSGSVADNWIHIYSFAEGLVKKFTNPNLRISIITYSTEAEVILPLTSDSKEINKSLLVLKNIVPQGLTHMQKGLRKANEQIRKSTLGGRIVNSVIIALTDGLLLLKPYLDTMEEAKKARRMGAIVYTVGVFMYSKQQLVNIAGDPDRCFGVDEGFSALEGVVDPLTSKSCTEILSVQPTYVCAKDFYQVNISGHGLNNTSNMKQVICRFKFSDSKVVDESPSDMNEHSITCPGPKIKHTGEDVSLQVSLNNGISFIGNKLIITSTNCWSPRASQGIVFKRTWLMFLPVLLVTLLLLCCTWKLCIKPKKLPPPPPKPEKEPEEESPPPSSPPAPGRGPGPGPSAGPGPGPGPSPGSGPARSPVPARPPPAPLPANTNPTVIVACCGCGNRGMQGNLDTCCDYFHPSCHPMPLVWCHPKAQGGYPGFAVMKPSCSQASCRQKHCLCSNRDCFHLAEPPYPTRIVFQPNEKYFSITQSHYSPKIRFQTNQESLPVAQTLCSKMCSPPNQECYTFKSPQSPYQARYTKSPARMLPLLPPHTRQSLESLCHTYPFPPISKGPKF.

Positions 1-27 (MMSHSPSMPCSALFLLLLLLLPPTFKG) are cleaved as a signal peptide. Over 28–363 (GSLRYHGPGW…ASQGIVFKRT (336 aa)) the chain is Extracellular. In terms of domain architecture, VWFA spans 76-247 (DLYLVLDKSG…SALEGVVDPL (172 aa)). Residues Ser84, Ser86, and Thr150 each coordinate a divalent metal cation. Residues 364 to 384 (WLMFLPVLLVTLLLLCCTWKL) traverse the membrane as a helical segment. Over 385 to 641 (CIKPKKLPPP…FPPISKGPKF (257 aa)) the chain is Cytoplasmic. The disordered stretch occupies residues 391 to 455 (LPPPPPKPEK…ARPPPAPLPA (65 aa)). A compositionally biased stretch (pro residues) spans 407 to 436 (PPPSSPPAPGRGPGPGPSAGPGPGPGPSPG).

It belongs to the ATR family.

It localises to the membrane. The chain is Anthrax toxin receptor-like (Antxrl) from Mus musculus (Mouse).